A 62-amino-acid chain; its full sequence is Beta-defensin 33 (62 aa).

A signal peptide spans Met-1 to Gly-20. Intrachain disulfides connect Cys-30–Cys-59, Cys-37–Cys-52, and Cys-45–Cys-60.

This sequence belongs to the beta-defensin family.

It is found in the secreted. Has antibacterial activity. This chain is Beta-defensin 33 (Defb33), found in Rattus norvegicus (Rat).